The chain runs to 103 residues: Large ribosomal subunit protein bL21 (103 aa).

The protein belongs to the bacterial ribosomal protein bL21 family. As to quaternary structure, part of the 50S ribosomal subunit. Contacts protein L20.

Its function is as follows. This protein binds to 23S rRNA in the presence of protein L20. In Enterobacter sp. (strain 638), this protein is Large ribosomal subunit protein bL21.